Reading from the N-terminus, the 186-residue chain is Elongation factor P (186 aa).

Belongs to the elongation factor P family.

Its subcellular location is the cytoplasm. It functions in the pathway protein biosynthesis; polypeptide chain elongation. Involved in peptide bond synthesis. Stimulates efficient translation and peptide-bond synthesis on native or reconstituted 70S ribosomes in vitro. Probably functions indirectly by altering the affinity of the ribosome for aminoacyl-tRNA, thus increasing their reactivity as acceptors for peptidyl transferase. In Ruminiclostridium cellulolyticum (strain ATCC 35319 / DSM 5812 / JCM 6584 / H10) (Clostridium cellulolyticum), this protein is Elongation factor P.